We begin with the raw amino-acid sequence, 279 residues long: DegV domain-containing protein SACOL1460 (279 aa).

Residues 4–278 (QIIVTDSTSD…QGAIGLVVLK (275 aa)) form the DegV domain. Hexadecanoate-binding residues include T61 and S93.

Functionally, may bind long-chain fatty acids, such as palmitate, and may play a role in lipid transport or fatty acid metabolism. This chain is DegV domain-containing protein SACOL1460, found in Staphylococcus aureus (strain COL).